The primary structure comprises 556 residues: Potassium-transporting ATPase potassium-binding subunit (556 aa).

The next 10 membrane-spanning stretches (helical) occupy residues 6-26 (AGLI…VPLG), 65-85 (GVLA…LVQG), 133-153 (GLAV…VALV), 176-196 (LRIL…GGAI), 249-269 (PTAW…FSLP), 283-303 (YAIA…MLWF), 378-398 (GLYG…LMVG), 419-439 (YFLV…ALPG), 483-503 (ALGL…LALA), and 526-546 (FVGM…LPML).

This sequence belongs to the KdpA family. In terms of assembly, the system is composed of three essential subunits: KdpA, KdpB and KdpC.

Its subcellular location is the cell membrane. In terms of biological role, part of the high-affinity ATP-driven potassium transport (or Kdp) system, which catalyzes the hydrolysis of ATP coupled with the electrogenic transport of potassium into the cytoplasm. This subunit binds the extracellular potassium ions and delivers the ions to the membrane domain of KdpB through an intramembrane tunnel. This Mycolicibacterium paratuberculosis (strain ATCC BAA-968 / K-10) (Mycobacterium paratuberculosis) protein is Potassium-transporting ATPase potassium-binding subunit.